Reading from the N-terminus, the 500-residue chain is NAD(P)H-quinone oxidoreductase chain 4, chloroplastic (500 aa).

The next 14 membrane-spanning stretches (helical) occupy residues 4-24 (FPWLTIIVVFPISAGSLMLFL), 35-55 (YTICICILELLLTTYTFCYNF), 87-107 (IGTILLTGFITTLAILAAFPV), 113-130 (LFHFLMLAMYSGQIGSFS), 134-154 (LLLFFIMWELELIPVYLLLSM), 167-187 (FILYTAGSSIFLLIGVLGISL), 211-231 (IILYIGFLIAFAVKSPLIPLH), 242-262 (HYSTCMLLAGILLKMGAYGLV), 272-292 (AHSMFSPWLMVVGTIQIIYAA), 305-325 (IAYSSVSHMGFIIIGIASITD), 330-350 (GAILQIISHGFIGAALFFLAG), 386-406 (LALPGMSGFVAEFIVFFGIIT), 416-436 (ILIIFVMAIGMILTPIYLLSM), and 466-486 (ISSLLPIIGMGIYPDFVLALA).

Belongs to the complex I subunit 4 family.

It is found in the plastid. The protein resides in the chloroplast thylakoid membrane. It carries out the reaction a plastoquinone + NADH + (n+1) H(+)(in) = a plastoquinol + NAD(+) + n H(+)(out). The enzyme catalyses a plastoquinone + NADPH + (n+1) H(+)(in) = a plastoquinol + NADP(+) + n H(+)(out). This Aethionema grandiflorum (Persian stone-cress) protein is NAD(P)H-quinone oxidoreductase chain 4, chloroplastic.